The sequence spans 337 residues: Inositol 2-dehydrogenase (337 aa).

It belongs to the Gfo/Idh/MocA family. As to quaternary structure, homotetramer.

The catalysed reaction is myo-inositol + NAD(+) = scyllo-inosose + NADH + H(+). Its function is as follows. Involved in the oxidation of myo-inositol (MI) to 2-keto-myo-inositol (2KMI or 2-inosose). The chain is Inositol 2-dehydrogenase from Klebsiella pneumoniae (strain 342).